We begin with the raw amino-acid sequence, 185 residues long: Elongation factor P (185 aa).

Belongs to the elongation factor P family.

The protein resides in the cytoplasm. It participates in protein biosynthesis; polypeptide chain elongation. In terms of biological role, involved in peptide bond synthesis. Stimulates efficient translation and peptide-bond synthesis on native or reconstituted 70S ribosomes in vitro. Probably functions indirectly by altering the affinity of the ribosome for aminoacyl-tRNA, thus increasing their reactivity as acceptors for peptidyl transferase. The chain is Elongation factor P from Salinispora tropica (strain ATCC BAA-916 / DSM 44818 / JCM 13857 / NBRC 105044 / CNB-440).